The sequence spans 532 residues: 5-methylcytosine-modifying enzyme 1 (532 aa).

L-ascorbate is bound at residue 335 to 337 (SLT). Fe cation-binding residues include histidine 345, aspartate 347, and histidine 397. 397-399 (HGT) serves as a coordination point for L-ascorbate.

It belongs to the TET family. Fe(2+) is required as a cofactor.

The protein localises to the nucleus. It carries out the reaction a 5-methyl-2'-deoxycytidine in DNA + L-ascorbate + O2 = a (8S,9S)-5-glyceryl-2'-deoxycytidine in DNA + glyoxylate + CO2. It catalyses the reaction a 5-methyl-2'-deoxycytidine in DNA + L-ascorbate + O2 = a (8S,9R)-5-glyceryl-2'-deoxycytidine in DNA + glyoxylate + CO2. Functionally, dioxygenase that catalyzes DNA modification by mediating the conversion of the modified genomic base 5-methylcytosine (5mC) into 5-glyceryl-methylcytosine (5gmC). Catalyzes the conjugation of a glyceryl moiety from L-ascorbate (vitamin C) to the methyl group of 5mC through a carbon-carbon bond. 5gmC DNA modification may be required during photosynthesis as an epigenetic mark that couteracts DNA methylation. This chain is 5-methylcytosine-modifying enzyme 1, found in Chlamydomonas reinhardtii (Chlamydomonas smithii).